Consider the following 214-residue polypeptide: Thiamine-phosphate synthase (214 aa).

Residues 37–41 (QYREK) and asparagine 73 contribute to the 4-amino-2-methyl-5-(diphosphooxymethyl)pyrimidine site. Mg(2+)-binding residues include aspartate 74 and aspartate 93. Residue serine 112 coordinates 4-amino-2-methyl-5-(diphosphooxymethyl)pyrimidine. 139–141 (TIS) serves as a coordination point for 2-[(2R,5Z)-2-carboxy-4-methylthiazol-5(2H)-ylidene]ethyl phosphate. Lysine 142 is a 4-amino-2-methyl-5-(diphosphooxymethyl)pyrimidine binding site. Residues glycine 171 and 191–192 (IS) contribute to the 2-[(2R,5Z)-2-carboxy-4-methylthiazol-5(2H)-ylidene]ethyl phosphate site.

The protein belongs to the thiamine-phosphate synthase family. It depends on Mg(2+) as a cofactor.

It carries out the reaction 2-[(2R,5Z)-2-carboxy-4-methylthiazol-5(2H)-ylidene]ethyl phosphate + 4-amino-2-methyl-5-(diphosphooxymethyl)pyrimidine + 2 H(+) = thiamine phosphate + CO2 + diphosphate. It catalyses the reaction 2-(2-carboxy-4-methylthiazol-5-yl)ethyl phosphate + 4-amino-2-methyl-5-(diphosphooxymethyl)pyrimidine + 2 H(+) = thiamine phosphate + CO2 + diphosphate. The enzyme catalyses 4-methyl-5-(2-phosphooxyethyl)-thiazole + 4-amino-2-methyl-5-(diphosphooxymethyl)pyrimidine + H(+) = thiamine phosphate + diphosphate. Its pathway is cofactor biosynthesis; thiamine diphosphate biosynthesis; thiamine phosphate from 4-amino-2-methyl-5-diphosphomethylpyrimidine and 4-methyl-5-(2-phosphoethyl)-thiazole: step 1/1. Condenses 4-methyl-5-(beta-hydroxyethyl)thiazole monophosphate (THZ-P) and 2-methyl-4-amino-5-hydroxymethyl pyrimidine pyrophosphate (HMP-PP) to form thiamine monophosphate (TMP). In Listeria monocytogenes serovar 1/2a (strain ATCC BAA-679 / EGD-e), this protein is Thiamine-phosphate synthase.